A 176-amino-acid polypeptide reads, in one-letter code: ATP-dependent protease subunit HslV (176 aa).

Residue T2 is part of the active site. Na(+)-binding residues include G157, C160, and T163.

It belongs to the peptidase T1B family. HslV subfamily. In terms of assembly, a double ring-shaped homohexamer of HslV is capped on each side by a ring-shaped HslU homohexamer. The assembly of the HslU/HslV complex is dependent on binding of ATP.

The protein localises to the cytoplasm. The catalysed reaction is ATP-dependent cleavage of peptide bonds with broad specificity.. Allosterically activated by HslU binding. In terms of biological role, protease subunit of a proteasome-like degradation complex believed to be a general protein degrading machinery. The sequence is that of ATP-dependent protease subunit HslV from Pseudomonas savastanoi pv. phaseolicola (strain 1448A / Race 6) (Pseudomonas syringae pv. phaseolicola (strain 1448A / Race 6)).